Reading from the N-terminus, the 396-residue chain is Tryptophan synthase beta chain (396 aa).

Lys86 is subject to N6-(pyridoxal phosphate)lysine.

It belongs to the TrpB family. Tetramer of two alpha and two beta chains. Pyridoxal 5'-phosphate serves as cofactor.

It catalyses the reaction (1S,2R)-1-C-(indol-3-yl)glycerol 3-phosphate + L-serine = D-glyceraldehyde 3-phosphate + L-tryptophan + H2O. Its pathway is amino-acid biosynthesis; L-tryptophan biosynthesis; L-tryptophan from chorismate: step 5/5. Functionally, the beta subunit is responsible for the synthesis of L-tryptophan from indole and L-serine. The sequence is that of Tryptophan synthase beta chain from Blochmanniella pennsylvanica (strain BPEN).